The primary structure comprises 84 residues: Putative UPF0320 protein YNL337W (84 aa).

Belongs to the UPF0320 family.

The protein is Putative UPF0320 protein YNL337W of Saccharomyces cerevisiae (strain ATCC 204508 / S288c) (Baker's yeast).